Here is a 243-residue protein sequence, read N- to C-terminus: NAD-dependent protein deacetylase (243 aa).

In terms of domain architecture, Deacetylase sirtuin-type spans 1–243; that stretch reads MRNDLETLKH…VSVVKSLMTE (243 aa). Positions 24, 35, 36, 105, 107, 108, and 123 each coordinate NAD(+). Phe35 serves as a coordination point for nicotinamide. Residues Ile107 and Asp108 each coordinate nicotinamide. His123 functions as the Proton acceptor in the catalytic mechanism. Positions 131, 134, 151, and 154 each coordinate Zn(2+). The NAD(+) site is built by Ser192, Ser193, Asn215, and Asp232.

Belongs to the sirtuin family. Class U subfamily. Zn(2+) is required as a cofactor.

The protein localises to the cytoplasm. The enzyme catalyses N(6)-acetyl-L-lysyl-[protein] + NAD(+) + H2O = 2''-O-acetyl-ADP-D-ribose + nicotinamide + L-lysyl-[protein]. In terms of biological role, NAD-dependent protein deacetylase which modulates the activities of several enzymes which are inactive in their acetylated form. This is NAD-dependent protein deacetylase from Staphylococcus aureus (strain MSSA476).